A 386-amino-acid polypeptide reads, in one-letter code: Phosphoglycerate kinase (386 aa).

Substrate contacts are provided by residues 21 to 23, Arg-36, 59 to 62, Arg-113, and Arg-146; these read DLN and HLGR. ATP is bound by residues Lys-197, Glu-314, and 340-343; that span reads GGDT.

This sequence belongs to the phosphoglycerate kinase family. As to quaternary structure, monomer.

The protein localises to the cytoplasm. It catalyses the reaction (2R)-3-phosphoglycerate + ATP = (2R)-3-phospho-glyceroyl phosphate + ADP. It participates in carbohydrate degradation; glycolysis; pyruvate from D-glyceraldehyde 3-phosphate: step 2/5. The chain is Phosphoglycerate kinase from Azotobacter vinelandii (strain DJ / ATCC BAA-1303).